The chain runs to 74 residues: Small ribosomal subunit protein bS18 (74 aa).

Belongs to the bacterial ribosomal protein bS18 family. In terms of assembly, part of the 30S ribosomal subunit. Forms a tight heterodimer with protein bS6.

Functionally, binds as a heterodimer with protein bS6 to the central domain of the 16S rRNA, where it helps stabilize the platform of the 30S subunit. This Thioalkalivibrio sulfidiphilus (strain HL-EbGR7) protein is Small ribosomal subunit protein bS18.